Here is a 20-residue protein sequence, read N- to C-terminus: 2-oxo-acid reductase (20 aa).

It belongs to the AOR/FOR family. Forms various types of homooligomers. The cofactor is [4Fe-4S] cluster. Requires Mo-molybdopterin as cofactor.

It localises to the cell membrane. The enzyme catalyses a (2R)-2-hydroxycarboxylate + A = a 2-oxocarboxylate + AH2. Is inhibited by cyanide. Is sensitive to oxygen. Its function is as follows. Oxidoreductase with an extremely broad substrate specificity that can reduce reversibly 2-oxocarboxylates to (2R)-hydroxycarboxylates. This Proteus hauseri protein is 2-oxo-acid reductase.